The following is a 790-amino-acid chain: Phenylalanine--tRNA ligase beta subunit (790 aa).

The tRNA-binding domain occupies Ala40 to Asn149. The 78-residue stretch at Asn402–Glu479 folds into the B5 domain. Asp457, Asp463, Glu466, and Glu467 together coordinate Mg(2+). The FDX-ACB domain occupies Ser698–Arg789.

This sequence belongs to the phenylalanyl-tRNA synthetase beta subunit family. Type 1 subfamily. Tetramer of two alpha and two beta subunits. Mg(2+) serves as cofactor.

It is found in the cytoplasm. It catalyses the reaction tRNA(Phe) + L-phenylalanine + ATP = L-phenylalanyl-tRNA(Phe) + AMP + diphosphate + H(+). This chain is Phenylalanine--tRNA ligase beta subunit, found in Francisella tularensis subsp. tularensis (strain SCHU S4 / Schu 4).